Consider the following 306-residue polypeptide: Bifunctional protein FolD (306 aa).

NADP(+) contacts are provided by residues 166-168 (GRS) and I232.

This sequence belongs to the tetrahydrofolate dehydrogenase/cyclohydrolase family. In terms of assembly, homodimer.

It carries out the reaction (6R)-5,10-methylene-5,6,7,8-tetrahydrofolate + NADP(+) = (6R)-5,10-methenyltetrahydrofolate + NADPH. The enzyme catalyses (6R)-5,10-methenyltetrahydrofolate + H2O = (6R)-10-formyltetrahydrofolate + H(+). The protein operates within one-carbon metabolism; tetrahydrofolate interconversion. Its function is as follows. Catalyzes the oxidation of 5,10-methylenetetrahydrofolate to 5,10-methenyltetrahydrofolate and then the hydrolysis of 5,10-methenyltetrahydrofolate to 10-formyltetrahydrofolate. The polypeptide is Bifunctional protein FolD (Methylorubrum extorquens (strain CM4 / NCIMB 13688) (Methylobacterium extorquens)).